The following is a 426-amino-acid chain: Histidine--tRNA ligase (426 aa).

It belongs to the class-II aminoacyl-tRNA synthetase family. Homodimer.

The protein localises to the cytoplasm. It catalyses the reaction tRNA(His) + L-histidine + ATP = L-histidyl-tRNA(His) + AMP + diphosphate + H(+). The polypeptide is Histidine--tRNA ligase (Legionella pneumophila (strain Paris)).